We begin with the raw amino-acid sequence, 199 residues long: ATP-dependent Clp protease proteolytic subunit (199 aa).

S98 functions as the Nucleophile in the catalytic mechanism. The active site involves H123.

The protein belongs to the peptidase S14 family. In terms of assembly, fourteen ClpP subunits assemble into 2 heptameric rings which stack back to back to give a disk-like structure with a central cavity, resembling the structure of eukaryotic proteasomes.

It localises to the cytoplasm. It catalyses the reaction Hydrolysis of proteins to small peptides in the presence of ATP and magnesium. alpha-casein is the usual test substrate. In the absence of ATP, only oligopeptides shorter than five residues are hydrolyzed (such as succinyl-Leu-Tyr-|-NHMec, and Leu-Tyr-Leu-|-Tyr-Trp, in which cleavage of the -Tyr-|-Leu- and -Tyr-|-Trp bonds also occurs).. In terms of biological role, cleaves peptides in various proteins in a process that requires ATP hydrolysis. Has a chymotrypsin-like activity. Plays a major role in the degradation of misfolded proteins. The chain is ATP-dependent Clp protease proteolytic subunit from Clostridium botulinum (strain Alaska E43 / Type E3).